The chain runs to 431 residues: Serine hydroxymethyltransferase (431 aa).

Residues Leu128 and 132–134 (GHL) contribute to the (6S)-5,6,7,8-tetrahydrofolate site. Lys237 bears the N6-(pyridoxal phosphate)lysine mark.

The protein belongs to the SHMT family. As to quaternary structure, homodimer. Pyridoxal 5'-phosphate is required as a cofactor.

Its subcellular location is the cytoplasm. The enzyme catalyses (6R)-5,10-methylene-5,6,7,8-tetrahydrofolate + glycine + H2O = (6S)-5,6,7,8-tetrahydrofolate + L-serine. The protein operates within one-carbon metabolism; tetrahydrofolate interconversion. It functions in the pathway amino-acid biosynthesis; glycine biosynthesis; glycine from L-serine: step 1/1. In terms of biological role, catalyzes the reversible interconversion of serine and glycine with tetrahydrofolate (THF) serving as the one-carbon carrier. This reaction serves as the major source of one-carbon groups required for the biosynthesis of purines, thymidylate, methionine, and other important biomolecules. Also exhibits THF-independent aldolase activity toward beta-hydroxyamino acids, producing glycine and aldehydes, via a retro-aldol mechanism. The polypeptide is Serine hydroxymethyltransferase (Ruegeria pomeroyi (strain ATCC 700808 / DSM 15171 / DSS-3) (Silicibacter pomeroyi)).